The sequence spans 308 residues: Formamidopyrimidine-DNA glycosylase (308 aa).

Residue P2 is the Schiff-base intermediate with DNA of the active site. E3 acts as the Proton donor in catalysis. K61 serves as the catalytic Proton donor; for beta-elimination activity. DNA is bound by residues H100, R120, and R181. The segment at 267–301 (AVYGQEGRPCPRCGALVRRDAFMNRSSFSCPVCQP) adopts an FPG-type zinc-finger fold. Residue R291 is the Proton donor; for delta-elimination activity of the active site.

This sequence belongs to the FPG family. Monomer. It depends on Zn(2+) as a cofactor.

The catalysed reaction is Hydrolysis of DNA containing ring-opened 7-methylguanine residues, releasing 2,6-diamino-4-hydroxy-5-(N-methyl)formamidopyrimidine.. It carries out the reaction 2'-deoxyribonucleotide-(2'-deoxyribose 5'-phosphate)-2'-deoxyribonucleotide-DNA = a 3'-end 2'-deoxyribonucleotide-(2,3-dehydro-2,3-deoxyribose 5'-phosphate)-DNA + a 5'-end 5'-phospho-2'-deoxyribonucleoside-DNA + H(+). Involved in base excision repair of DNA damaged by oxidation or by mutagenic agents. Acts as a DNA glycosylase that recognizes and removes damaged bases. Has a preference for oxidized purines, such as 7,8-dihydro-8-oxoguanine (8-oxoG). Has AP (apurinic/apyrimidinic) lyase activity and introduces nicks in the DNA strand. Cleaves the DNA backbone by beta-delta elimination to generate a single-strand break at the site of the removed base with both 3'- and 5'-phosphates. The protein is Formamidopyrimidine-DNA glycosylase of Kineococcus radiotolerans (strain ATCC BAA-149 / DSM 14245 / SRS30216).